The chain runs to 936 residues: ATP-dependent RNA helicase dbp10 (936 aa).

Residues 1 to 48 are disordered; it reads MPSRAASPALSENEFDITGALFQNDSDSDAETQKPTKRKKVPAAPNVN. The Q motif signature appears at 91-119; the sequence is GGFQAMGLNANLLKAIARKGFSVPTPIQR. One can recognise a Helicase ATP-binding domain in the interval 122–294; it reads IPVIMEDQDV…RAGLQDPTLV (173 aa). 135-142 contacts ATP; sequence ARTGSGKT. Positions 242–245 match the DEAD box motif; it reads DEAD. Disordered regions lie at residues 337–363, 642–684, 701–721, and 843–936; these read TEAS…EMER, EAKK…PDNM, TTDK…PTTL, and TPGL…SRKK. Residues 341–352 show a composition bias toward basic and acidic residues; it reads LRLKEKGPEDSK. The 152-residue stretch at 360 to 511 folds into the Helicase C-terminal domain; the sequence is EMERAVNMKE…SDQVNFAEDV (152 aa). Residues 663–675 are compositionally biased toward acidic residues; it reads AEVDGDAFSDLEG. The segment covering 701 to 717 has biased composition (low complexity); sequence TTDKASKSNSNSKSDST. Residues 867-895 are compositionally biased toward basic and acidic residues; it reads EKAPKAADPLRGDYEKMKKKAEAARERAA. Residues 896–906 show a composition bias toward low complexity; it reads SKVGGVTSGGK. The segment covering 907-916 has biased composition (basic and acidic residues); the sequence is SEIRNTDDIR. A compositionally biased stretch (basic residues) spans 917–936; sequence KARKLKQKRREKNARPSRKK.

This sequence belongs to the DEAD box helicase family. DDX54/DBP10 subfamily.

The protein localises to the nucleus. It localises to the nucleolus. The catalysed reaction is ATP + H2O = ADP + phosphate + H(+). In terms of biological role, ATP-binding RNA helicase involved in the biogenesis of 60S ribosomal subunits and is required for the normal formation of 25S and 5.8S rRNAs. The sequence is that of ATP-dependent RNA helicase dbp10 (dbp10) from Emericella nidulans (strain FGSC A4 / ATCC 38163 / CBS 112.46 / NRRL 194 / M139) (Aspergillus nidulans).